The following is a 218-amino-acid chain: Holliday junction branch migration complex subunit RuvA (218 aa).

The tract at residues 1-64 (MIGKITGRLE…EDVMQLFGFT (64 aa)) is domain I. A domain II region spans residues 65-143 (TLTEKEWHRL…SVMGMSDTQA (79 aa)). Residues 144–164 (TVAAQSSDAVIETRAAPSPVV) are flexible linker. The interval 165–218 (QNPSAQAEALSALSNLGYAPGDAAAAVAQAAGELPDAETPDLIRAALKRLAPKG) is domain III.

Belongs to the RuvA family. As to quaternary structure, homotetramer. Forms an RuvA(8)-RuvB(12)-Holliday junction (HJ) complex. HJ DNA is sandwiched between 2 RuvA tetramers; dsDNA enters through RuvA and exits via RuvB. An RuvB hexamer assembles on each DNA strand where it exits the tetramer. Each RuvB hexamer is contacted by two RuvA subunits (via domain III) on 2 adjacent RuvB subunits; this complex drives branch migration. In the full resolvosome a probable DNA-RuvA(4)-RuvB(12)-RuvC(2) complex forms which resolves the HJ.

It localises to the cytoplasm. Functionally, the RuvA-RuvB-RuvC complex processes Holliday junction (HJ) DNA during genetic recombination and DNA repair, while the RuvA-RuvB complex plays an important role in the rescue of blocked DNA replication forks via replication fork reversal (RFR). RuvA specifically binds to HJ cruciform DNA, conferring on it an open structure. The RuvB hexamer acts as an ATP-dependent pump, pulling dsDNA into and through the RuvAB complex. HJ branch migration allows RuvC to scan DNA until it finds its consensus sequence, where it cleaves and resolves the cruciform DNA. The chain is Holliday junction branch migration complex subunit RuvA from Roseobacter denitrificans (strain ATCC 33942 / OCh 114) (Erythrobacter sp. (strain OCh 114)).